We begin with the raw amino-acid sequence, 82 residues long: uncharacterized protein (82 aa).

2 helical membrane-spanning segments follow: residues 22-39 (WASDVVIQFITIVVMFIA) and 46-65 (LKMGGIIFVCCIGSAVTWVI).

It localises to the cell membrane. This is an uncharacterized protein from Bacillus subtilis (strain 168).